We begin with the raw amino-acid sequence, 194 residues long: Aminodeoxychorismate/anthranilate synthase component 2 (194 aa).

Residues 1–194 form the Glutamine amidotransferase type-1 domain; the sequence is MILMIDNYDS…IETYRKEVIA (194 aa). Residues C79, H168, and E170 contribute to the active site.

Monomer. Heterodimer consisting of two non-identical subunits: a glutamine amidotransferase subunit (PabA) and a aminodeoxychorismate synthase subunit (PabB).

The catalysed reaction is chorismate + L-glutamine = anthranilate + pyruvate + L-glutamate + H(+). It carries out the reaction chorismate + L-glutamine = 4-amino-4-deoxychorismate + L-glutamate. Its pathway is amino-acid biosynthesis; L-tryptophan biosynthesis; L-tryptophan from chorismate: step 1/5. It functions in the pathway cofactor biosynthesis; tetrahydrofolate biosynthesis; 4-aminobenzoate from chorismate: step 1/2. Part of a heterodimeric complex that catalyzes the two-step biosynthesis of 4-amino-4-deoxychorismate (ADC), a precursor of p-aminobenzoate (PABA) and tetrahydrofolate. In the first step, a glutamine amidotransferase (PabA) generates ammonia as a substrate that, along with chorismate, is used in the second step, catalyzed by aminodeoxychorismate synthase (PabB) to produce ADC. PabA converts glutamine into glutamate only in the presence of stoichiometric amounts of PabB. Also involved in the biosynthesis of anthranilate. Complements a glutamine amidotransferase-negative mutant. The chain is Aminodeoxychorismate/anthranilate synthase component 2 from Bacillus subtilis (strain 168).